The primary structure comprises 475 residues: tRNA-2-methylthio-N(6)-dimethylallyladenosine synthase (475 aa).

Residues 1–10 are compositionally biased toward basic and acidic residues; the sequence is MQETTVKRDG. A disordered region spans residues 1 to 22; it reads MQETTVKRDGASPSDAGTPATT. Residues 27–144 form the MTTase N-terminal domain; it reads GKLYIRTFGC…LPDLIKRRRA (118 aa). Residues Cys36, Cys73, Cys107, Cys181, Cys185, and Cys188 each coordinate [4Fe-4S] cluster. A Radical SAM core domain is found at 167 to 400; the sequence is RVDGATAFVS…QALINQQAAA (234 aa). A TRAM domain is found at 403 to 466; that stretch reads QGMIGTRQRV…TNSLRGRVAG (64 aa).

Belongs to the methylthiotransferase family. MiaB subfamily. As to quaternary structure, monomer. It depends on [4Fe-4S] cluster as a cofactor.

It localises to the cytoplasm. It catalyses the reaction N(6)-dimethylallyladenosine(37) in tRNA + (sulfur carrier)-SH + AH2 + 2 S-adenosyl-L-methionine = 2-methylsulfanyl-N(6)-dimethylallyladenosine(37) in tRNA + (sulfur carrier)-H + 5'-deoxyadenosine + L-methionine + A + S-adenosyl-L-homocysteine + 2 H(+). Catalyzes the methylthiolation of N6-(dimethylallyl)adenosine (i(6)A), leading to the formation of 2-methylthio-N6-(dimethylallyl)adenosine (ms(2)i(6)A) at position 37 in tRNAs that read codons beginning with uridine. The polypeptide is tRNA-2-methylthio-N(6)-dimethylallyladenosine synthase (Bordetella parapertussis (strain 12822 / ATCC BAA-587 / NCTC 13253)).